Reading from the N-terminus, the 196-residue chain is Leucyl/phenylalanyl-tRNA--protein transferase (196 aa).

This sequence belongs to the L/F-transferase family.

The protein resides in the cytoplasm. The catalysed reaction is N-terminal L-lysyl-[protein] + L-leucyl-tRNA(Leu) = N-terminal L-leucyl-L-lysyl-[protein] + tRNA(Leu) + H(+). It carries out the reaction N-terminal L-arginyl-[protein] + L-leucyl-tRNA(Leu) = N-terminal L-leucyl-L-arginyl-[protein] + tRNA(Leu) + H(+). The enzyme catalyses L-phenylalanyl-tRNA(Phe) + an N-terminal L-alpha-aminoacyl-[protein] = an N-terminal L-phenylalanyl-L-alpha-aminoacyl-[protein] + tRNA(Phe). Functionally, functions in the N-end rule pathway of protein degradation where it conjugates Leu, Phe and, less efficiently, Met from aminoacyl-tRNAs to the N-termini of proteins containing an N-terminal arginine or lysine. This Thermosynechococcus vestitus (strain NIES-2133 / IAM M-273 / BP-1) protein is Leucyl/phenylalanyl-tRNA--protein transferase.